A 135-amino-acid polypeptide reads, in one-letter code: Protein E6 (135 aa).

Zinc fingers lie at residues 11–47 (CVFC…CTAC) and 83–119 (CMYC…CYTC).

It belongs to the papillomaviridae E6 protein family. Forms homodimers. Interacts with ubiquitin-protein ligase UBE3A/E6-AP; this interaction stimulates UBE3A ubiquitin activity. Interacts with host BAK1.

The protein localises to the host cytoplasm. Its subcellular location is the host nucleus. Its function is as follows. Plays a major role in the induction and maintenance of cellular transformation. E6 associates with host UBE3A/E6-AP ubiquitin-protein ligase and modulates its activity. Protects host keratinocytes from apoptosis by mediating the degradation of host BAK1. May also inhibit host immune response. The protein is Protein E6 of Odocoileus virginianus papillomavirus 1 (DPV).